A 190-amino-acid chain; its full sequence is Putative triphosphatase YjbK (190 aa).

The 186-residue stretch at 4-189 (EIEIEFKNML…LRFYEEKRKS (186 aa)) folds into the CYTH domain.

The sequence is that of Putative triphosphatase YjbK (yjbK) from Bacillus subtilis (strain 168).